The following is a 128-amino-acid chain: Flagellar basal body rod protein FlgB (128 aa).

Belongs to the flagella basal body rod proteins family. As to quaternary structure, the basal body constitutes a major portion of the flagellar organelle and consists of a number of rings mounted on a central rod. In Gram-negative bacteria, at least four rings, L, P, S and M are present, whereas Gram-positive bacteria lack the L and P rings. The rod consists of about 26 subunits of FlgG in the distal portion, and FlgB, FlgC and FlgF build up the proximal portion of the rod with about 6 subunits each. Rod assembly occurs by export via the flagellum-specific pathway of its constituent proteins and by their incorporation into the rod structure in the probable order of FlgB, FlgC, FlgF and FlgG. Another protein, FliE, also assembles onto the stable rod structure.

It localises to the bacterial flagellum basal body. In terms of biological role, structural component of flagellum, the bacterial motility apparatus. Part of the rod structure of flagellar basal body. This is Flagellar basal body rod protein FlgB from Cereibacter sphaeroides (Rhodobacter sphaeroides).